Here is a 294-residue protein sequence, read N- to C-terminus: Urease accessory protein UreD (294 aa).

The segment at Met-1–Gly-22 is disordered.

This sequence belongs to the UreD family. As to quaternary structure, ureD, UreF and UreG form a complex that acts as a GTP-hydrolysis-dependent molecular chaperone, activating the urease apoprotein by helping to assemble the nickel containing metallocenter of UreC. The UreE protein probably delivers the nickel.

It localises to the cytoplasm. In terms of biological role, required for maturation of urease via the functional incorporation of the urease nickel metallocenter. The polypeptide is Urease accessory protein UreD (Alcanivorax borkumensis (strain ATCC 700651 / DSM 11573 / NCIMB 13689 / SK2)).